Consider the following 424-residue polypeptide: Glutamate-1-semialdehyde 2,1-aminomutase (424 aa).

At Lys-260 the chain carries N6-(pyridoxal phosphate)lysine.

The protein belongs to the class-III pyridoxal-phosphate-dependent aminotransferase family. HemL subfamily. The cofactor is pyridoxal 5'-phosphate.

It localises to the cytoplasm. It carries out the reaction (S)-4-amino-5-oxopentanoate = 5-aminolevulinate. The protein operates within porphyrin-containing compound metabolism; protoporphyrin-IX biosynthesis; 5-aminolevulinate from L-glutamyl-tRNA(Glu): step 2/2. The chain is Glutamate-1-semialdehyde 2,1-aminomutase from Nitrosopumilus maritimus (strain SCM1).